We begin with the raw amino-acid sequence, 706 residues long: Lethal(3)malignant brain tumor-like protein 2 (706 aa).

Residues 1–85 (MEKPRGVEET…GTPRSLDGSG (85 aa)) form a disordered region. Ser13 carries the phosphoserine modification. The span at 15–26 (PMEEEEEDDDLE) shows a compositional bias: acidic residues. The span at 39–50 (SSAGSESSSYLE) shows a compositional bias: low complexity. The segment covering 54–63 (EAEHEDREAG) has biased composition (basic and acidic residues). Ser68 is modified (phosphoserine). Position 77 is a phosphothreonine (Thr77). Residues 82–117 (DGSGSEPAVCEMCGIVGTREAFFSKTKRFCSVSCSR) form an FCS-type zinc finger. The Zn(2+) site is built by Cys91, Cys94, Cys111, and Cys115. MBT repeat units follow at residues 180–284 (FDWG…LVPP), 292–392 (TDWK…IKLS), 398–501 (MAHH…LTPP), and 509–605 (FSWE…LQPP). Ser339 is subject to Phosphoserine. A Glycyl lysine isopeptide (Lys-Gly) (interchain with G-Cter in SUMO2) cross-link involves residue Lys406. The disordered stretch occupies residues 606–669 (VATEPTTPLK…KAPSEPAPDE (64 aa)). The segment covering 620-635 (TKKKKKQFGKKRKRIP) has biased composition (basic residues). Glycyl lysine isopeptide (Lys-Gly) (interchain with G-Cter in SUMO2) cross-links involve residues Lys648, Lys660, and Lys676. The segment at 685-706 (ADKALSPELPVPVENIKQETDD) is disordered. Position 690 is a phosphoserine (Ser690). A Glycyl lysine isopeptide (Lys-Gly) (interchain with G-Cter in SUMO1); alternate cross-link involves residue Lys701. A Glycyl lysine isopeptide (Lys-Gly) (interchain with G-Cter in SUMO2); alternate cross-link involves residue Lys701.

Part of the E2F6.com-1 complex in G0 phase composed of E2F6, MGA, MAX, TFDP1, CBX3, BAT8, EUHMTASE1, RING1, RNF2, MBLR, BAT8 and YAF2.

It localises to the nucleus. Functionally, putative Polycomb group (PcG) protein. PcG proteins maintain the transcriptionally repressive state of genes, probably via a modification of chromatin, rendering it heritably changed in its expressibility. Its association with a chromatin-remodeling complex suggests that it may contribute to prevent expression of genes that trigger the cell into mitosis. Binds to monomethylated and dimethylated 'Lys-20' on histone H4. Binds histone H3 peptides that are monomethylated or dimethylated on 'Lys-4', 'Lys-9' or 'Lys-27'. The polypeptide is Lethal(3)malignant brain tumor-like protein 2 (L3MBTL2) (Bos taurus (Bovine)).